Consider the following 55-residue polypeptide: Hirustasin (55 aa).

Intrachain disulfides connect cysteine 6–cysteine 17, cysteine 11–cysteine 22, cysteine 24–cysteine 44, cysteine 29–cysteine 48, and cysteine 33–cysteine 50. Residues 24 to 50 (CNEVHCRIRCKYGLKKDENGCEYPCSC) form the Antistasin-like domain.

It belongs to the protease inhibitor I15 (antistasin) family.

It localises to the secreted. Acts as an inhibitor of tissue kallikrein, trypsin, chymotrypsin and neutrophil cathepsin G. The protein is Hirustasin of Hirudo medicinalis (Medicinal leech).